The sequence spans 548 residues: CTP synthase (548 aa).

Residues methionine 1–leucine 270 are amidoligase domain. CTP is bound at residue serine 13. Residue serine 13 participates in UTP binding. ATP is bound by residues serine 14–isoleucine 19 and aspartate 71. Aspartate 71 and glutamate 144 together coordinate Mg(2+). Residues aspartate 151 to glutamate 153, lysine 191 to glutamine 196, and lysine 227 contribute to the CTP site. UTP contacts are provided by residues lysine 191 to glutamine 196 and lysine 227. In terms of domain architecture, Glutamine amidotransferase type-1 spans threonine 295–arginine 545. Glycine 356 contacts L-glutamine. Residue cysteine 383 is the Nucleophile; for glutamine hydrolysis of the active site. Residues leucine 384 to glutamine 387, glutamate 407, and arginine 473 contribute to the L-glutamine site. Catalysis depends on residues histidine 518 and glutamate 520.

This sequence belongs to the CTP synthase family. As to quaternary structure, homotetramer.

The catalysed reaction is UTP + L-glutamine + ATP + H2O = CTP + L-glutamate + ADP + phosphate + 2 H(+). It carries out the reaction L-glutamine + H2O = L-glutamate + NH4(+). It catalyses the reaction UTP + NH4(+) + ATP = CTP + ADP + phosphate + 2 H(+). It functions in the pathway pyrimidine metabolism; CTP biosynthesis via de novo pathway; CTP from UDP: step 2/2. Allosterically activated by GTP, when glutamine is the substrate; GTP has no effect on the reaction when ammonia is the substrate. The allosteric effector GTP functions by stabilizing the protein conformation that binds the tetrahedral intermediate(s) formed during glutamine hydrolysis. Inhibited by the product CTP, via allosteric rather than competitive inhibition. Its function is as follows. Catalyzes the ATP-dependent amination of UTP to CTP with either L-glutamine or ammonia as the source of nitrogen. Regulates intracellular CTP levels through interactions with the four ribonucleotide triphosphates. This chain is CTP synthase, found in Bordetella petrii (strain ATCC BAA-461 / DSM 12804 / CCUG 43448).